We begin with the raw amino-acid sequence, 178 residues long: CRISPR system ring nuclease SSO2081 (178 aa).

Residues 105-106 (RK) form a transition state stabilizer region.

Belongs to the cOA ring nuclease family. As to quaternary structure, homodimer. Requires Does not require a metal cofactor. as cofactor.

Its subcellular location is the cytoplasm. It catalyses the reaction cyclic tetraadenylate = 2 5'-hydroxy-diadenylate 2',3'-cylic phosphate. CRISPR (clustered regularly interspaced short palindromic repeat) is an adaptive immune system that provides protection against mobile genetic elements (viruses, transposable elements and conjugative plasmids). CRISPR clusters contain spacers, sequences complementary to antecedent mobile elements, and target invading nucleic acids. CRISPR clusters are transcribed and processed into CRISPR RNA (crRNA). A nuclease that degrades cyclic oligoadenylates (cOA), second messengers that induce an antiviral state important for defense against invading nucleic acids. Destruction of cOA deactivates the Csx1 ribonuclease, preventing uncontrolled degradation of cellular RNA. Degrades cA4 (a tetraadenylate ring) into a linear diadenylate product with 5'-OH and 2',3'-cyclic phosphate termini. Is 10-fold more active than SSO1393, suggesting this is the major cA4 degradation enzyme. Is highly specific for cA4; it has very poor activity on cA6 and no discernible activity against a number of cyclic dinucleotides. There may be 2 active sites per homodimer. In Saccharolobus solfataricus (strain ATCC 35092 / DSM 1617 / JCM 11322 / P2) (Sulfolobus solfataricus), this protein is CRISPR system ring nuclease SSO2081.